A 317-amino-acid chain; its full sequence is Ricin B-like lectin EULS3 (317 aa).

Basic residues predominate over residues Met-1–His-11. The segment at Met-1–Pro-157 is disordered. Residues Val-25 to Pro-36 show a composition bias toward pro residues. Polar residues predominate over residues His-136–Gly-146. Residues Thr-168–Phe-315 enclose the Ricin B-type lectin domain.

In terms of assembly, interacts (via N-terminus) with ATS3A and ATS3B. As to expression, expressed in roots, rosette leaves, stems, cauline leaves and flowers.

The protein resides in the nucleus. Its subcellular location is the cytoplasm. In terms of biological role, lectin which binds carbohydrates in vitro. Interacts through its lectin domain with glycan structures containing one or more Lewis X, Lewis Y or lactosamine motifs. May play a role in abiotic stress responses. May play a role in abscisic acid-induced stomatal closure. May play a role in disease resistance against Pseudomonas syringae through its involvement in stomatal movement. In Arabidopsis thaliana (Mouse-ear cress), this protein is Ricin B-like lectin EULS3.